The sequence spans 213 residues: High frequency lysogenization protein HflD homolog (213 aa).

It belongs to the HflD family.

It localises to the cytoplasm. The protein localises to the cell inner membrane. The chain is High frequency lysogenization protein HflD homolog from Klebsiella pneumoniae (strain 342).